The primary structure comprises 277 residues: Large ribosomal subunit protein uL2 (277 aa).

The interval 212-277 (RWRGKRPHVR…KFIVRGRKSK (66 aa)) is disordered. Over residues 254–277 (TAGKKTRDKKKASTKFIVRGRKSK) the composition is skewed to basic residues.

The protein belongs to the universal ribosomal protein uL2 family. Part of the 50S ribosomal subunit. Forms a bridge to the 30S subunit in the 70S ribosome.

In terms of biological role, one of the primary rRNA binding proteins. Required for association of the 30S and 50S subunits to form the 70S ribosome, for tRNA binding and peptide bond formation. It has been suggested to have peptidyltransferase activity; this is somewhat controversial. Makes several contacts with the 16S rRNA in the 70S ribosome. This Leuconostoc mesenteroides subsp. mesenteroides (strain ATCC 8293 / DSM 20343 / BCRC 11652 / CCM 1803 / JCM 6124 / NCDO 523 / NBRC 100496 / NCIMB 8023 / NCTC 12954 / NRRL B-1118 / 37Y) protein is Large ribosomal subunit protein uL2.